The following is a 349-amino-acid chain: Rhodopsin (349 aa).

The Extracellular portion of the chain corresponds to Thr-1–Ala-33. N-linked (GlcNAc...) asparagine glycosylation occurs at Asn-12. A helical membrane pass occupies residues Phe-34 to Val-58. The Cytoplasmic portion of the chain corresponds to Thr-59–Asn-70. A helical membrane pass occupies residues Tyr-71–Tyr-93. Residues Thr-94–Cys-107 are Extracellular-facing. Cys-107 and Cys-184 are oxidised to a cystine. Residues Asn-108–Val-130 form a helical membrane-spanning segment. Positions Glu-131–Trp-133 match the 'Ionic lock' involved in activated form stabilization motif. Residues Glu-131 to His-149 are Cytoplasmic-facing. Residues Ala-150–Val-170 form a helical membrane-spanning segment. Topologically, residues Gly-171–Ser-199 are extracellular. Asn-197 carries N-linked (GlcNAc...) asparagine glycosylation. The chain crosses the membrane as a helical span at residues Phe-200–Gly-221. Residues Arg-222 to Arg-249 are Cytoplasmic-facing. Residues Met-250–Tyr-271 traverse the membrane as a helical segment. Residues Ile-272–Leu-283 lie on the Extracellular side of the membrane. Residues Phe-284–Cys-305 form a helical membrane-spanning segment. N6-(retinylidene)lysine is present on Lys-293. At Leu-306–Ala-349 the chain is on the cytoplasmic side. Cys-320 is lipidated: S-palmitoyl cysteine. A disordered region spans residues Glu-326–Ala-349. The segment covering Ala-331–Ala-349 has biased composition (low complexity).

This sequence belongs to the G-protein coupled receptor 1 family. Opsin subfamily. In terms of processing, phosphorylated on some or all of the serine and threonine residues present in the C-terminal region. Contains one covalently linked retinal chromophore.

The protein localises to the membrane. Its subcellular location is the cell projection. It localises to the cilium. The protein resides in the photoreceptor outer segment. Its function is as follows. Photoreceptor required for image-forming vision at low light intensity. While most salt water fish species use retinal as chromophore, most freshwater fish use 3-dehydroretinal, or a mixture of retinal and 3-dehydroretinal. Light-induced isomerization of 11-cis to all-trans retinal triggers a conformational change that activates signaling via G-proteins. Subsequent receptor phosphorylation mediates displacement of the bound G-protein alpha subunit by arrestin and terminates signaling. The protein is Rhodopsin (rho) of Myripristis berndti (Bigscale soldierfish).